The chain runs to 440 residues: Tryptophan synthase beta chain (440 aa).

Lysine 110 bears the N6-(pyridoxal phosphate)lysine mark.

Belongs to the TrpB family. In terms of assembly, tetramer of two alpha and two beta chains. Requires pyridoxal 5'-phosphate as cofactor.

The catalysed reaction is (1S,2R)-1-C-(indol-3-yl)glycerol 3-phosphate + L-serine = D-glyceraldehyde 3-phosphate + L-tryptophan + H2O. The protein operates within amino-acid biosynthesis; L-tryptophan biosynthesis; L-tryptophan from chorismate: step 5/5. Its function is as follows. The beta subunit is responsible for the synthesis of L-tryptophan from indole and L-serine. This is Tryptophan synthase beta chain from Thermococcus gammatolerans (strain DSM 15229 / JCM 11827 / EJ3).